A 161-amino-acid chain; its full sequence is Transcriptional repressor NrdR (161 aa).

A compositionally biased stretch (polar residues) spans 1-11 (MRCPSCNSLDT). The segment at 1–20 (MRCPSCNSLDTQVKDSRPTE) is disordered. The segment at 3–34 (CPSCNSLDTQVKDSRPTEDSSVIRRRRVCVTC) is a zinc-finger region. The ATP-cone domain occupies 49–139 (LTVIKRNGRR…VYRNFREAKD (91 aa)).

The protein belongs to the NrdR family. The cofactor is Zn(2+).

Functionally, negatively regulates transcription of bacterial ribonucleotide reductase nrd genes and operons by binding to NrdR-boxes. The polypeptide is Transcriptional repressor NrdR (Bradyrhizobium sp. (strain ORS 278)).